The following is a 270-amino-acid chain: MAAWAERLTGVRGVLLDISGVLCDSSASGATAIAGSVEAVARLKQSPLKVRFCTNESQKSLRELVGVLQQLGFDISEEEVTAPAPATCQILKERGLRPHLLIHEGVRSEFDDIDMSNPNCVVIADAGEAFSYQNMNRAFQVLMELENPVLISLGKGRYYKETSGLMLDVGGYMKALEYACGIKAEVVGKPSPEFFKSALQAIGVEAHQAIMIGDDIVGDVGGAQQCGMRALQVRTGKFRPGDEHHPEVQADGYVDNLAEAVDLLLKYTDK.

Mg(2+)-binding residues include Asp17 and Ser19. Substrate is bound by residues 17–19, 54–55, and Lys189; these read DIS and TN. Position 214 (Asp214) interacts with Mg(2+).

Belongs to the HAD-like hydrolase superfamily. As to quaternary structure, homodimer. Requires Mg(2+) as cofactor.

It localises to the cytoplasm. The protein localises to the nucleus. The catalysed reaction is diphosphate + H2O = 2 phosphate + H(+). Functionally, phosphatase that hydrolyzes imidodiphosphate, 3-phosphohistidine and 6-phospholysine. Has broad substrate specificity and can also hydrolyze inorganic diphosphate, but with lower efficiency. In Mus musculus (Mouse), this protein is Phospholysine phosphohistidine inorganic pyrophosphate phosphatase (Lhpp).